The chain runs to 286 residues: MAETGDRSVEVVELDSLRVRLRIRGYPVVFVNAIRRTVLSDVPTMAVDYAYIFDNTTAVYDEMVAHRLGLVVLDSNEAVEKYRRPEECAGKEPSEEDCFVEVSLEAEVDAEGETGRYITAGDLSISDPQVKPVYPETPLIYVAPGQRIHVQAFARLGRGKEHTKWSPASLSVLRYTPILIYDSSKAGDECLECLSAYPQVVEALKSGGKGSLVLEGLRRTSGLRYCAETACRGAVEVRYDSSNLDLEVESTGALRPEKIVELAIRELEEKVKRFAEAVESVGVEES.

The protein belongs to the archaeal Rpo3/eukaryotic RPB3 RNA polymerase subunit family. Part of the RNA polymerase complex.

It is found in the cytoplasm. It catalyses the reaction RNA(n) + a ribonucleoside 5'-triphosphate = RNA(n+1) + diphosphate. In terms of biological role, DNA-dependent RNA polymerase (RNAP) catalyzes the transcription of DNA into RNA using the four ribonucleoside triphosphates as substrates. The polypeptide is DNA-directed RNA polymerase subunit Rpo3 (Aeropyrum pernix (strain ATCC 700893 / DSM 11879 / JCM 9820 / NBRC 100138 / K1)).